Consider the following 184-residue polypeptide: Adenine phosphoribosyltransferase (184 aa).

Belongs to the purine/pyrimidine phosphoribosyltransferase family. In terms of assembly, homodimer.

Its subcellular location is the cytoplasm. The enzyme catalyses AMP + diphosphate = 5-phospho-alpha-D-ribose 1-diphosphate + adenine. It functions in the pathway purine metabolism; AMP biosynthesis via salvage pathway; AMP from adenine: step 1/1. Catalyzes a salvage reaction resulting in the formation of AMP, that is energically less costly than de novo synthesis. The protein is Adenine phosphoribosyltransferase of Blochmanniella pennsylvanica (strain BPEN).